The following is a 640-amino-acid chain: Epithelial sodium channel subunit beta (640 aa).

The Cytoplasmic portion of the chain corresponds to 1–50 (MHVKKYLLKGLHRLQKGPGYTYKELLVWYCDNTNTHGPKRIICEGPKKKA). Residues 51-71 (MWFLLTLLFAALVCWQWGIFI) form a helical membrane-spanning segment. Residues 72–532 (RTYLSWEVSV…GGQFGFWMGG (461 aa)) are Extracellular-facing. Cystine bridges form between C98–C272, C184–C189, C196–C203, C249–C256, C361–C448, C386–C444, C390–C440, C399–C426, and C401–C415. N260 is a glycosylation site (N-linked (GlcNAc...) asparagine). Residues 533-553 (SVLCLIEFGEIIIDFVWITII) traverse the membrane as a helical segment. Residues 554–640 (KLVALAKSLR…IESDSEGDAI (87 aa)) lie on the Cytoplasmic side of the membrane. The segment at 590–640 (FQPDTAPRSPNTGPYPSEQALPIPGTPPPNYDSLRLQPLDVIESDSEGDAI) is disordered. The short motif at 616–620 (PPPNY) is the PY motif; recruits WW domain-containing proteins and is thereby required for ubiquitination and inhibition of the channel by NEDD4 and NEDD4L element. Acidic residues predominate over residues 631 to 640 (IESDSEGDAI). Phosphoserine is present on residues S633 and S635.

Belongs to the amiloride-sensitive sodium channel (TC 1.A.6) family. SCNN1B subfamily. As to quaternary structure, component of the heterotrimeric epithelial sodium channel (ENaC) composed of an alpha/SCNN1A, a beta/SCNN1B and a gamma/SCNN1G subunit. An additional delta/SCNN1D subunit can replace the alpha/SCNN1A subunit to form an alternative channel with specific properties. Interacts with WWP1 (via WW domains). Interacts with WWP2 (via WW domains); inhibits the channel. Interacts with the full-length immature form of PCSK9 (pro-PCSK9); inhibits ENaC by promoting its proteasomal degradation. Interacts (N-glycosylated) with BPIFA1; the interaction is direct and inhibits the proteolytic processing of SCNN1A and SCNN1G and the activation of ENaC. Post-translationally, ubiquitinated. Can be ubiquitinated at multiple sites and undergo monoubiquitination and polyubiquitination. Ubiquitination by NEDD4 or NEDD4L inhibits the ENaC channel through endocytosis, intracellular retention and degradation of its individual subunits. However, some studies could not confirm the ubiquitination of this subunit of the ENaC. In terms of processing, phosphorylated on serine and threonine residues. Aldosterone and insulin increase the basal level of phosphorylation. N-glycosylated. N-glycosylation is required for interaction with BPIFA1. As to expression, detected in placenta, lung and kidney. Expressed in kidney (at protein level).

The protein localises to the apical cell membrane. The protein resides in the cytoplasmic vesicle membrane. It carries out the reaction Na(+)(in) = Na(+)(out). Its activity is regulated as follows. Originally identified and characterized by its inhibition by the diuretic drug amiloride. Its function is as follows. This is one of the three pore-forming subunits of the heterotrimeric epithelial sodium channel (ENaC), a critical regulator of sodium balance and fluid homeostasis. ENaC operates in epithelial tissues, where it mediates the electrodiffusion of sodium ions from extracellular fluid through the apical membrane of cells, with water following osmotically. It plays a key role in maintaining sodium homeostasis through electrogenic sodium reabsorption in the kidneys. Additionally, ENaC is essential for airway surface liquid homeostasis, which is crucial for proper mucus clearance. The chain is Epithelial sodium channel subunit beta from Homo sapiens (Human).